The following is a 255-amino-acid chain: Zinc import ATP-binding protein ZnuC 1 (255 aa).

The ABC transporter domain maps to 7–220 (IRLQDVTVKI…PAFINLFGTQ (214 aa)). Residue 39-46 (GPNGAGKS) coordinates ATP. The tract at residues 229-255 (HHHHDHHHHTDGTVAAGSECSHGDQHA) is disordered.

Belongs to the ABC transporter superfamily. Zinc importer (TC 3.A.1.15.5) family. As to quaternary structure, the complex is composed of two ATP-binding proteins (ZnuC), two transmembrane proteins (ZnuB) and a solute-binding protein (ZnuA).

Its subcellular location is the cell inner membrane. The catalysed reaction is Zn(2+)(out) + ATP(in) + H2O(in) = Zn(2+)(in) + ADP(in) + phosphate(in) + H(+)(in). Its function is as follows. Part of the ABC transporter complex ZnuABC involved in zinc import. Responsible for energy coupling to the transport system. The protein is Zinc import ATP-binding protein ZnuC 1 of Hahella chejuensis (strain KCTC 2396).